A 180-amino-acid polypeptide reads, in one-letter code: Acireductone dioxygenase (180 aa).

H99, H101, E105, and H145 together coordinate Fe(2+). Residues H99, H101, E105, and H145 each contribute to the Ni(2+) site.

The protein belongs to the acireductone dioxygenase (ARD) family. Monomer. Requires Fe(2+) as cofactor. It depends on Ni(2+) as a cofactor.

It carries out the reaction 1,2-dihydroxy-5-(methylsulfanyl)pent-1-en-3-one + O2 = 3-(methylsulfanyl)propanoate + CO + formate + 2 H(+). The enzyme catalyses 1,2-dihydroxy-5-(methylsulfanyl)pent-1-en-3-one + O2 = 4-methylsulfanyl-2-oxobutanoate + formate + 2 H(+). The protein operates within amino-acid biosynthesis; L-methionine biosynthesis via salvage pathway; L-methionine from S-methyl-5-thio-alpha-D-ribose 1-phosphate: step 5/6. Catalyzes 2 different reactions between oxygen and the acireductone 1,2-dihydroxy-3-keto-5-methylthiopentene (DHK-MTPene) depending upon the metal bound in the active site. Fe-containing acireductone dioxygenase (Fe-ARD) produces formate and 2-keto-4-methylthiobutyrate (KMTB), the alpha-ketoacid precursor of methionine in the methionine recycle pathway. Ni-containing acireductone dioxygenase (Ni-ARD) produces methylthiopropionate, carbon monoxide and formate, and does not lie on the methionine recycle pathway. The protein is Acireductone dioxygenase of Geobacillus kaustophilus (strain HTA426).